The following is a 250-amino-acid chain: 5-oxoprolinase subunit A (250 aa).

It belongs to the LamB/PxpA family. In terms of assembly, forms a complex composed of PxpA, PxpB and PxpC.

It catalyses the reaction 5-oxo-L-proline + ATP + 2 H2O = L-glutamate + ADP + phosphate + H(+). Functionally, catalyzes the cleavage of 5-oxoproline to form L-glutamate coupled to the hydrolysis of ATP to ADP and inorganic phosphate. The polypeptide is 5-oxoprolinase subunit A (Staphylococcus aureus (strain MW2)).